Reading from the N-terminus, the 393-residue chain is Argininosuccinate synthase (393 aa).

ATP contacts are provided by residues Ala7–Ser15 and Ala34. Residues Tyr85 and Ser90 each coordinate L-citrulline. Gly115 contributes to the ATP binding site. The L-aspartate site is built by Thr117, Asn121, and Asp122. An L-citrulline-binding site is contributed by Asn121. Positions 125, 176, 185, 261, and 273 each coordinate L-citrulline.

Belongs to the argininosuccinate synthase family. Type 1 subfamily. As to quaternary structure, homotetramer.

The protein localises to the cytoplasm. It catalyses the reaction L-citrulline + L-aspartate + ATP = 2-(N(omega)-L-arginino)succinate + AMP + diphosphate + H(+). It participates in amino-acid biosynthesis; L-arginine biosynthesis; L-arginine from L-ornithine and carbamoyl phosphate: step 2/3. The sequence is that of Argininosuccinate synthase from Ehrlichia canis (strain Jake).